The primary structure comprises 165 residues: Thiol peroxidase (165 aa).

The Thioredoxin domain maps to R18–K164. The active-site Cysteine sulfenic acid (-SOH) intermediate is C60. A disulfide bridge links C60 with C94.

Belongs to the peroxiredoxin family. Tpx subfamily. In terms of assembly, homodimer.

It catalyses the reaction a hydroperoxide + [thioredoxin]-dithiol = an alcohol + [thioredoxin]-disulfide + H2O. Its function is as follows. Thiol-specific peroxidase that catalyzes the reduction of hydrogen peroxide and organic hydroperoxides to water and alcohols, respectively. Plays a role in cell protection against oxidative stress by detoxifying peroxides. This Listeria monocytogenes serotype 4b (strain F2365) protein is Thiol peroxidase.